The primary structure comprises 689 residues: Elongation factor G (689 aa).

The tr-type G domain maps to 8-283 (SKCRNIGIMA…AVVDFLPAPN (276 aa)). Residues 17-24 (AHIDAGKT), 81-85 (DTPGH), and 135-138 (NKMD) contribute to the GTP site.

Belongs to the TRAFAC class translation factor GTPase superfamily. Classic translation factor GTPase family. EF-G/EF-2 subfamily.

It is found in the cytoplasm. Functionally, catalyzes the GTP-dependent ribosomal translocation step during translation elongation. During this step, the ribosome changes from the pre-translocational (PRE) to the post-translocational (POST) state as the newly formed A-site-bound peptidyl-tRNA and P-site-bound deacylated tRNA move to the P and E sites, respectively. Catalyzes the coordinated movement of the two tRNA molecules, the mRNA and conformational changes in the ribosome. The chain is Elongation factor G from Ehrlichia ruminantium (strain Welgevonden).